The chain runs to 183 residues: Ribonuclease H (183 aa).

Residues 2–151 (SQARFIAFSD…VDQLAQAAAR (150 aa)) enclose the RNase H type-1 domain. Asp11, Glu57, Asp79, and Asp143 together coordinate Mg(2+).

Belongs to the RNase H family. As to quaternary structure, monomer. It depends on Mg(2+) as a cofactor.

The protein localises to the cytoplasm. The catalysed reaction is Endonucleolytic cleavage to 5'-phosphomonoester.. In terms of biological role, endonuclease that specifically degrades the RNA of RNA-DNA hybrids. The chain is Ribonuclease H from Anaeromyxobacter sp. (strain K).